Here is a 599-residue protein sequence, read N- to C-terminus: Adenine deaminase (599 aa).

It belongs to the metallo-dependent hydrolases superfamily. Adenine deaminase family. Mn(2+) is required as a cofactor.

It catalyses the reaction adenine + H2O + H(+) = hypoxanthine + NH4(+). The chain is Adenine deaminase from Clostridium botulinum (strain Loch Maree / Type A3).